The sequence spans 527 residues: Berberine bridge enzyme-like 14 (527 aa).

A signal peptide spans 1–23 (MKSSTTQTLIFTVFLLLIPTSFA). A disulfide bridge connects residues cysteine 35 and cysteine 96. Residues asparagine 47, asparagine 72, asparagine 161, asparagine 296, asparagine 328, asparagine 396, and asparagine 481 are each glycosylated (N-linked (GlcNAc...) asparagine). The region spanning 74-249 (TTRKPVAIVA…LAWKIKLVPV (176 aa)) is the FAD-binding PCMH-type domain. The segment at residues 111 to 174 (HDYDGMSYLS…NLRGFPAGIC (64 aa)) is a cross-link (6-(S-cysteinyl)-8alpha-(pros-histidyl)-FAD (His-Cys)).

The protein belongs to the oxygen-dependent FAD-linked oxidoreductase family. FAD serves as cofactor. Post-translationally, the FAD cofactor is bound via a bicovalent 6-S-cysteinyl, 8alpha-N1-histidyl FAD linkage.

The protein resides in the secreted. It is found in the cell wall. The polypeptide is Berberine bridge enzyme-like 14 (Arabidopsis thaliana (Mouse-ear cress)).